Here is a 103-residue protein sequence, read N- to C-terminus: Small ribosomal subunit protein uS10 (103 aa).

It belongs to the universal ribosomal protein uS10 family. Part of the 30S ribosomal subunit.

Involved in the binding of tRNA to the ribosomes. The sequence is that of Small ribosomal subunit protein uS10 from Vibrio cholerae serotype O1 (strain ATCC 39541 / Classical Ogawa 395 / O395).